The primary structure comprises 227 residues: Ribonuclease 3 (227 aa).

The 123-residue stretch at Leu-5–Gly-127 folds into the RNase III domain. Glu-40 provides a ligand contact to Mg(2+). Residue Asp-44 is part of the active site. Asp-113 and Glu-116 together coordinate Mg(2+). Glu-116 is a catalytic residue. The region spanning Asp-154–Ala-224 is the DRBM domain.

Belongs to the ribonuclease III family. As to quaternary structure, homodimer. Mg(2+) is required as a cofactor.

The protein localises to the cytoplasm. It catalyses the reaction Endonucleolytic cleavage to 5'-phosphomonoester.. Functionally, digests double-stranded RNA. Involved in the processing of primary rRNA transcript to yield the immediate precursors to the large and small rRNAs (23S and 16S). Processes some mRNAs, and tRNAs when they are encoded in the rRNA operon. Processes pre-crRNA and tracrRNA of type II CRISPR loci if present in the organism. The sequence is that of Ribonuclease 3 from Delftia acidovorans (strain DSM 14801 / SPH-1).